A 143-amino-acid chain; its full sequence is MSTFFAKANAVERKWYVIDAAGLPLGRLATEAARILRGKHKPTFTPNVDTGDHVIIINAEKVVLTGNKLDQKMYRRHSGYPGGLKETPYRKLMQNMPERAVEHAVKGMLPHNKLGAQMYTKLKVYRDENHPHQAQQPEVWTIQ.

Belongs to the universal ribosomal protein uL13 family. As to quaternary structure, part of the 50S ribosomal subunit.

Functionally, this protein is one of the early assembly proteins of the 50S ribosomal subunit, although it is not seen to bind rRNA by itself. It is important during the early stages of 50S assembly. This is Large ribosomal subunit protein uL13 from Desulfitobacterium hafniense (strain DSM 10664 / DCB-2).